Reading from the N-terminus, the 405-residue chain is Putative aminotransferase AatC (405 aa).

N6-(pyridoxal phosphate)lysine is present on Lys238.

This sequence belongs to the class-I pyridoxal-phosphate-dependent aminotransferase family. Homodimer. Pyridoxal 5'-phosphate serves as cofactor.

Its subcellular location is the cytoplasm. This chain is Putative aminotransferase AatC (aatC), found in Rhizobium meliloti (strain 1021) (Ensifer meliloti).